A 513-amino-acid chain; its full sequence is ATP synthase subunit alpha (513 aa).

169 to 176 provides a ligand contact to ATP; it reads GDRQTGKT.

It belongs to the ATPase alpha/beta chains family. F-type ATPases have 2 components, CF(1) - the catalytic core - and CF(0) - the membrane proton channel. CF(1) has five subunits: alpha(3), beta(3), gamma(1), delta(1), epsilon(1). CF(0) has three main subunits: a(1), b(2) and c(9-12). The alpha and beta chains form an alternating ring which encloses part of the gamma chain. CF(1) is attached to CF(0) by a central stalk formed by the gamma and epsilon chains, while a peripheral stalk is formed by the delta and b chains.

It localises to the cell inner membrane. It catalyses the reaction ATP + H2O + 4 H(+)(in) = ADP + phosphate + 5 H(+)(out). Produces ATP from ADP in the presence of a proton gradient across the membrane. The alpha chain is a regulatory subunit. In Haemophilus influenzae (strain 86-028NP), this protein is ATP synthase subunit alpha.